A 225-amino-acid polypeptide reads, in one-letter code: Small ribosomal subunit protein uS7 (225 aa).

It belongs to the universal ribosomal protein uS7 family. In terms of assembly, component of the small ribosomal subunit. Mature ribosomes consist of a small (40S) and a large (60S) subunit. The 40S subunit contains about 32 different proteins and 1 molecule of RNA (18S). The 60S subunit contains 45 different proteins and 3 molecules of RNA (25S, 5.8S and 5S).

The protein localises to the cytoplasm. In terms of biological role, component of the ribosome, a large ribonucleoprotein complex responsible for the synthesis of proteins in the cell. The small ribosomal subunit (SSU) binds messenger RNAs (mRNAs) and translates the encoded message by selecting cognate aminoacyl-transfer RNA (tRNA) molecules. The large subunit (LSU) contains the ribosomal catalytic site termed the peptidyl transferase center (PTC), which catalyzes the formation of peptide bonds, thereby polymerizing the amino acids delivered by tRNAs into a polypeptide chain. The nascent polypeptides leave the ribosome through a tunnel in the LSU and interact with protein factors that function in enzymatic processing, targeting, and the membrane insertion of nascent chains at the exit of the ribosomal tunnel. The chain is Small ribosomal subunit protein uS7 (RPS5) from Candida albicans (strain SC5314 / ATCC MYA-2876) (Yeast).